A 188-amino-acid polypeptide reads, in one-letter code: Nicotinamide-nucleotide adenylyltransferase (188 aa).

Belongs to the archaeal NMN adenylyltransferase family.

The protein localises to the cytoplasm. It carries out the reaction beta-nicotinamide D-ribonucleotide + ATP + H(+) = diphosphate + NAD(+). The protein operates within cofactor biosynthesis; NAD(+) biosynthesis; NAD(+) from nicotinamide D-ribonucleotide: step 1/1. The protein is Nicotinamide-nucleotide adenylyltransferase of Pyrococcus furiosus (strain ATCC 43587 / DSM 3638 / JCM 8422 / Vc1).